Consider the following 357-residue polypeptide: Membrane-bound lytic murein transglycosylase C (357 aa).

The N-terminal stretch at 1–15 is a signal peptide; the sequence is MKKYLLLALLPFLYA. A lipid anchor (N-palmitoyl cysteine) is attached at cysteine 16. A lipid anchor (S-diacylglycerol cysteine) is attached at cysteine 16.

The protein belongs to the transglycosylase Slt family.

It localises to the cell outer membrane. It carries out the reaction Exolytic cleavage of the (1-&gt;4)-beta-glycosidic linkage between N-acetylmuramic acid (MurNAc) and N-acetylglucosamine (GlcNAc) residues in peptidoglycan, from either the reducing or the non-reducing ends of the peptidoglycan chains, with concomitant formation of a 1,6-anhydrobond in the MurNAc residue.. Functionally, murein-degrading enzyme. May play a role in recycling of muropeptides during cell elongation and/or cell division. The chain is Membrane-bound lytic murein transglycosylase C from Haemophilus influenzae (strain PittEE).